Consider the following 30-residue polypeptide: MATKHGKNSWKTLYLKISFLGCKVVVLLKR.

Belongs to the AapA toxin family.

The protein resides in the cell inner membrane. Transcription of the aapA1 gene generates a full-length transcript whose folding impedes translation. Processing of the 3' end of the aapA1 message generates a shorter transcript that becomes translatable after a structural rearrangement. The processing also makes it more susceptible to forming dsRNA with IsoA1 which leads to duplex RNA degradation by RNase 3 (rnc). In terms of biological role, may be involved in response to oxidative stress. Toxic component of a type I toxin-antitoxin (TA) system. When overexpression is induced in situ in the absence of its cognate antisense RNA antitoxin IsoA1 it leads to cell growth arrest and cell death without lysis. Neutralized by IsoA1 RNA which forms an extensive duplex with the mRNA. Binds artificial prokaryotic and eukaryotic lipid membranes, with 30-fold higher affinity for prokaryotic membranes. Molecular dynamics suggests the peptide penetrates the membrane leading to lipid reorganization and thinning of the bilayer. Induction of toxin in the absence of antitoxin RNA causes a fast conversion of cells from spiral-shaped to coccoid forms; cells have no visible membrane defects and resemble wild-type 'aging coccoids'. Toxin causes a moderate decrease in membrane potential and ATP content and alterations in peptidoglycan muropeptide abundance; GlcNAc-MurNAc dipeptides increase while GlcNAc-MurNAc tripeptides decrease (i.e. a faster phenocopy of cell aging). Deletion of all 6 AapA/IsoA TA loci in strain B128 leads to slower than wild-type conversion of H2O2-treated cells to the coccoid form. This suggests oxidative stress triggers coccoid transformation via these type I TA systems, although other factors eventually drive the morphology change. The polypeptide is Toxic protein AapA1 (Helicobacter pylori (strain ATCC 700392 / 26695) (Campylobacter pylori)).